The following is a 256-amino-acid chain: Cysteine-rich repeat secretory protein 29 (256 aa).

The N-terminal stretch at 1–26 is a signal peptide; sequence MSSVFGSVHILAMIAIQLLLIHSVSS. Gnk2-homologous domains follow at residues 33–136 and 142–253; these read YLHH…SVAS and YEND…LYPF.

The protein belongs to the cysteine-rich repeat secretory protein family.

It localises to the secreted. This chain is Cysteine-rich repeat secretory protein 29 (CRRSP29), found in Arabidopsis thaliana (Mouse-ear cress).